Consider the following 123-residue polypeptide: Large ribosomal subunit protein bL19c (123 aa).

Belongs to the bacterial ribosomal protein bL19 family.

Its subcellular location is the plastid. The protein resides in the chloroplast. The sequence is that of Large ribosomal subunit protein bL19c from Pyropia yezoensis (Susabi-nori).